The sequence spans 285 residues: GPN-loop GTPase 3 (285 aa).

13-18 (GSGKST) lines the GTP pocket. The Gly-Pro-Asn (GPN)-loop; involved in dimer interface signature appears at 72 to 74 (GPN). 174 to 177 (TKMD) is a binding site for GTP. A disordered region spans residues 262-285 (EPKEVDEEPSNSNFDAFFQDTADS).

It belongs to the GPN-loop GTPase family. In terms of assembly, heterodimer with gpn1. Binds to RNA polymerase II (RNAPII).

Small GTPase required for proper localization of RNA polymerase II (RNAPII). May act at an RNAP assembly step prior to nuclear import. This is GPN-loop GTPase 3 from Danio rerio (Zebrafish).